The chain runs to 1163 residues: Zinc finger protein 516 (1163 aa).

A compositionally biased stretch (basic and acidic residues) spans Met-1–Arg-13. A disordered region spans residues Met-1–Val-26. The interval Met-1–Ala-431 is mediates promoter DNA-binding and activation of transcription. 7 consecutive C2H2-type zinc fingers follow at residues His-34 to His-56, Tyr-62 to His-84, Val-174 to His-197, Phe-200 to His-223, Phe-248 to His-270, His-276 to His-298, and Glu-335 to His-357. A compositionally biased stretch (basic and acidic residues) spans Ser-460–Asp-469. Disordered regions lie at residues Ser-460–Gly-512, His-533–His-667, and His-679–Leu-730. Low complexity predominate over residues Arg-496–Ala-507. The segment at Ser-515–His-537 adopts a C2H2-type 8 zinc-finger fold. Residues Arg-542–Ala-552 show a composition bias toward basic and acidic residues. A compositionally biased stretch (polar residues) spans Glu-561–Gly-572. The segment covering Glu-588–Ala-598 has biased composition (acidic residues). Residues Glu-615–Asp-625 show a composition bias toward polar residues. Over residues Gln-626 to Glu-641 the composition is skewed to basic and acidic residues. Lys-643 participates in a covalent cross-link: Glycyl lysine isopeptide (Lys-Gly) (interchain with G-Cter in SUMO2). The span at Ser-656–His-667 shows a compositional bias: basic and acidic residues. Residue Lys-681 forms a Glycyl lysine isopeptide (Lys-Gly) (interchain with G-Cter in SUMO2) linkage. Residues Pro-706–Gly-720 are compositionally biased toward basic and acidic residues. The C2H2-type 9; atypical zinc finger occupies His-760–His-783. The interval Thr-838–Ala-1007 is disordered. Low complexity predominate over residues Val-840 to Val-857. Glycyl lysine isopeptide (Lys-Gly) (interchain with G-Cter in SUMO2) cross-links involve residues Lys-1043 and Lys-1062. The segment at Phe-1098–His-1120 adopts a C2H2-type 10 zinc-finger fold. The segment at Ser-1126–Thr-1163 is disordered.

Belongs to the krueppel C2H2-type zinc-finger protein family. Interacts with PRDM16; the interaction is direct and may play a role in the transcription of brown adipose tissue-specific genes. Interacts with PWWP2B. Interacts with HDAC1; this interaction is enhanced in the presence of PWWP2B.

Its subcellular location is the nucleus. In terms of biological role, transcriptional regulator that binds to the promoter and activates the transcription of genes promoting brown adipose tissue (BAT) differentiation. Among brown adipose tissue-specific genes, binds the proximal region of the promoter of the UCP1 gene to activate its transcription and thereby regulate thermogenesis. May also play a role in the cellular response to replication stress. The polypeptide is Zinc finger protein 516 (Homo sapiens (Human)).